The sequence spans 198 residues: Recombination protein RecR (198 aa).

A C4-type zinc finger spans residues 57–72; the sequence is CSVCGHITDQDPCAIC. Positions 80–175 constitute a Toprim domain; that stretch reads SLICVVQDPK…RTTRIAHGLP (96 aa).

Belongs to the RecR family.

Its function is as follows. May play a role in DNA repair. It seems to be involved in an RecBC-independent recombinational process of DNA repair. It may act with RecF and RecO. The protein is Recombination protein RecR of Oceanobacillus iheyensis (strain DSM 14371 / CIP 107618 / JCM 11309 / KCTC 3954 / HTE831).